Here is a 446-residue protein sequence, read N- to C-terminus: Glutamyl-tRNA(Gln) amidotransferase subunit D (446 aa).

The Asparaginase/glutaminase domain occupies 90–421 (SEVMIISTGG…DRIKEIMLTN (332 aa)). Residues Thr-100, Thr-176, Asp-177, and Lys-255 contribute to the active site.

Belongs to the asparaginase 1 family. GatD subfamily. Heterodimer of GatD and GatE.

It carries out the reaction L-glutamyl-tRNA(Gln) + L-glutamine + ATP + H2O = L-glutaminyl-tRNA(Gln) + L-glutamate + ADP + phosphate + H(+). Its function is as follows. Allows the formation of correctly charged Gln-tRNA(Gln) through the transamidation of misacylated Glu-tRNA(Gln) in organisms which lack glutaminyl-tRNA synthetase. The reaction takes place in the presence of glutamine and ATP through an activated gamma-phospho-Glu-tRNA(Gln). The GatDE system is specific for glutamate and does not act on aspartate. This Sulfolobus acidocaldarius (strain ATCC 33909 / DSM 639 / JCM 8929 / NBRC 15157 / NCIMB 11770) protein is Glutamyl-tRNA(Gln) amidotransferase subunit D.